The following is a 336-amino-acid chain: Coproporphyrin III ferrochelatase (336 aa).

The Fe-coproporphyrin III site is built by S52 and Y116. Positions 172 and 255 each coordinate Fe(2+).

The protein belongs to the ferrochelatase family.

It localises to the cytoplasm. The enzyme catalyses Fe-coproporphyrin III + 2 H(+) = coproporphyrin III + Fe(2+). It participates in porphyrin-containing compound metabolism; protoheme biosynthesis. Its function is as follows. Involved in coproporphyrin-dependent heme b biosynthesis. Catalyzes the insertion of ferrous iron into coproporphyrin III to form Fe-coproporphyrin III. This is Coproporphyrin III ferrochelatase from Mycobacterium avium (strain 104).